Reading from the N-terminus, the 311-residue chain is MKGSHGPCSDLTVTMLENVPLAPLTTLKIGGNARWLVRPSGVKGLSRYCRTCPGDLPRFILGGGSNLLVDDNGFHGVVVDLTHTLNAIVVEHQDAHGGILRVEAGAATRKTAHVARQNGLAGLAFMAGIPGTIGGALRMNAGAYGCDVKGVLLDAQLMDATGNLHTRNAQELGLAYRHCDLPKGWIFVSARFHLARGESEAIKSQMRDYNHKRTQAQPLRYPSAGSVFRNPAGAAAWQLIDAAGLRGHRIGDAQISEKHSNFFVNLGAASSLHMEELIELARNRVAQHSGVQLTLEIGILTPQGLRTEPGR.

The FAD-binding PCMH-type domain occupies 28 to 197 (KIGGNARWLV…VSARFHLARG (170 aa)). R177 is an active-site residue. S226 serves as the catalytic Proton donor. E296 is an active-site residue.

The protein belongs to the MurB family. The cofactor is FAD.

The protein resides in the cytoplasm. The enzyme catalyses UDP-N-acetyl-alpha-D-muramate + NADP(+) = UDP-N-acetyl-3-O-(1-carboxyvinyl)-alpha-D-glucosamine + NADPH + H(+). It functions in the pathway cell wall biogenesis; peptidoglycan biosynthesis. Cell wall formation. This Magnetococcus marinus (strain ATCC BAA-1437 / JCM 17883 / MC-1) protein is UDP-N-acetylenolpyruvoylglucosamine reductase.